A 320-amino-acid polypeptide reads, in one-letter code: V-set and transmembrane domain-containing protein 4 (320 aa).

Residues 1-23 (MRLLALAAAALLARAPAPEVCAA) form the signal peptide. The Ig-like domain maps to 24 to 155 (LNVTVSPGPV…SSATEMRVIS (132 aa)). The Extracellular portion of the chain corresponds to 24 to 180 (LNVTVSPGPV…WAFFEDLYVY (157 aa)). Residues asparagine 25, asparagine 41, asparagine 89, and asparagine 144 are each glycosylated (N-linked (GlcNAc...) asparagine). Residues cysteine 46 and cysteine 127 are joined by a disulfide bond. Residues 181–201 (AVLVCCVGILSILLFMLVIVW) traverse the membrane as a helical segment. Residues 202–320 (QSVFNKRKSR…AQILFEENKL (119 aa)) are Cytoplasmic-facing.

Proteolytically cleaved to generate a bioactive peptide.

Its subcellular location is the secreted. It is found in the cell membrane. In terms of biological role, peptide Lv enhances L-type voltage-gated calcium channel (L-VGCC) currents in retinal photoreceptors. The polypeptide is V-set and transmembrane domain-containing protein 4 (VSTM4) (Homo sapiens (Human)).